A 408-amino-acid chain; its full sequence is F-box A protein 155 (408 aa).

Residues 1 to 22 (MSDRGSDQSSSSSDSAQHIPPK) form a disordered region.

It belongs to the FTH family.

This is F-box A protein 155 (fbxa-155) from Caenorhabditis elegans.